Consider the following 267-residue polypeptide: 5'-methylthioadenosine nucleosidase (267 aa).

The active-site Proton acceptor is the Glu38. S-methyl-5'-thioadenosine-binding positions include Thr116, 199–202 (KDME), and Asp225. 2 residues coordinate adenine: Lys199 and Asp225. Asp225 acts as the Proton donor in catalysis.

It belongs to the PNP/UDP phosphorylase family. MtnN subfamily. Homodimer. Interacts with CBL3 in a calcium-dependent manner. As to expression, expressed in roots, leaves, stems, cauline leaves and flowers.

It catalyses the reaction S-methyl-5'-thioadenosine + H2O = 5-(methylsulfanyl)-D-ribose + adenine. The protein operates within amino-acid biosynthesis; L-methionine biosynthesis via salvage pathway; S-methyl-5-thio-alpha-D-ribose 1-phosphate from S-methyl-5'-thioadenosine (hydrolase route): step 1/2. Inhibited by CBL3 in a calcium-dependent manner. Inhibited by 5'-methylthiotubercidin (MTT) and by formycin A (FMA). Its function is as follows. Enzyme of the methionine cycle that catalyzes the irreversible cleavage of the glycosidic bond in 5'-methylthioadenosine (MTA) to adenine and 5'-methylthioribose. Contributes to the maintenance of AdoMet homeostasis and is required to sustain high rates of ethylene synthesis. Inactive towards S-adenosylhomocysteine (SAH/AdoHcy). The chain is 5'-methylthioadenosine nucleosidase (MTN1) from Arabidopsis thaliana (Mouse-ear cress).